Reading from the N-terminus, the 314-residue chain is Acetaldehyde dehydrogenase (314 aa).

An NAD(+)-binding site is contributed by 14-17; the sequence is SGNI. Residue C132 is the Acyl-thioester intermediate of the active site. Residues 163-171 and N291 contribute to the NAD(+) site; that span reads SAGPGTRAN.

Belongs to the acetaldehyde dehydrogenase family.

The catalysed reaction is acetaldehyde + NAD(+) + CoA = acetyl-CoA + NADH + H(+). This Polaromonas sp. (strain JS666 / ATCC BAA-500) protein is Acetaldehyde dehydrogenase.